A 423-amino-acid polypeptide reads, in one-letter code: GTPase HflX (423 aa).

Positions 201-363 (IQLALVGYTN…KIEQALKGMM (163 aa)) constitute a Hflx-type G domain. Residues 207 to 214 (GYTNAGKS), 232 to 236 (FATLD), 254 to 257 (DTVG), 320 to 323 (NKAD), and 341 to 343 (SAY) each bind GTP. Residues Ser-214 and Thr-234 each contribute to the Mg(2+) site.

Belongs to the TRAFAC class OBG-HflX-like GTPase superfamily. HflX GTPase family. Monomer. Associates with the 50S ribosomal subunit. It depends on Mg(2+) as a cofactor.

It is found in the cytoplasm. Its function is as follows. GTPase that associates with the 50S ribosomal subunit and may have a role during protein synthesis or ribosome biogenesis. This is GTPase HflX from Alkalihalophilus pseudofirmus (strain ATCC BAA-2126 / JCM 17055 / OF4) (Bacillus pseudofirmus).